The chain runs to 317 residues: tRNA-cytidine(32) 2-sulfurtransferase (317 aa).

Positions Met-1 to Ile-29 are disordered. A PP-loop motif motif is present at residues Ser-65–Ser-70. Residues Cys-140, Cys-143, and Cys-231 each coordinate [4Fe-4S] cluster.

It belongs to the TtcA family. As to quaternary structure, homodimer. Requires Mg(2+) as cofactor. [4Fe-4S] cluster serves as cofactor.

Its subcellular location is the cytoplasm. The catalysed reaction is cytidine(32) in tRNA + S-sulfanyl-L-cysteinyl-[cysteine desulfurase] + AH2 + ATP = 2-thiocytidine(32) in tRNA + L-cysteinyl-[cysteine desulfurase] + A + AMP + diphosphate + H(+). It functions in the pathway tRNA modification. Its function is as follows. Catalyzes the ATP-dependent 2-thiolation of cytidine in position 32 of tRNA, to form 2-thiocytidine (s(2)C32). The sulfur atoms are provided by the cysteine/cysteine desulfurase (IscS) system. The sequence is that of tRNA-cytidine(32) 2-sulfurtransferase from Acidovorax ebreus (strain TPSY) (Diaphorobacter sp. (strain TPSY)).